Here is a 1406-residue protein sequence, read N- to C-terminus: Sterol 3-beta-glucosyltransferase (1406 aa).

Positions 83–231 are disordered; that stretch reads ARFDESSDSD…IHSSHESSTS (149 aa). Residues 110-128 are compositionally biased toward polar residues; it reads GSSNPVNSQTEQRSGSQTS. Residues 209 to 231 show a composition bias toward low complexity; it reads SAGRSQNSSQESSIHSSHESSTS. The GRAM 1 domain maps to 236–286; sequence RLMEMFDFNKPEKVLVEYACSLLQSMLLQGYMYVTEGHICFYAYLPRKSTV. The PH domain occupies 286–385; it reads VAIKSGYLHK…WVKALQKVIF (100 aa). Disordered stretches follow at residues 457 to 558 and 576 to 622; these read ASGH…AESA and LDKR…DGKP. The span at 468–478 shows a compositional bias: basic and acidic residues; sequence HADRSPRSDRT. Composition is skewed to polar residues over residues 490 to 499 and 531 to 548; these read GTSQPGNGSA and SESI…SAVW. Residues 576-587 are compositionally biased toward basic and acidic residues; that stretch reads LDKRACSDERSG. Positions 730–796 constitute a GRAM 2 domain; it reads DRFRAHFALP…KDVENVEKEK (67 aa). UDP-alpha-D-glucose is bound by residues Ser-917, Arg-918, Asp-920, Ala-1220, His-1222, His-1235, Gly-1239, Thr-1240, Asp-1259, and Gln-1260. Residues 1334-1406 form a disordered region; sequence QRSIASSTPF…LTNSIHGAGR (73 aa). Residues 1336–1349 show a composition bias toward low complexity; it reads SIASSTPFSPTPSA. Over residues 1355–1375 the composition is skewed to acidic residues; it reads QGDDDVEDSEEWTFVGDDNEM. Positions 1376 to 1387 are enriched in basic and acidic residues; sequence DMSRRMRDRAIS. A compositionally biased stretch (polar residues) spans 1397–1406; the sequence is LTNSIHGAGR.

The protein belongs to the glycosyltransferase 28 family.

It localises to the cytoplasm. Its subcellular location is the preautophagosomal structure membrane. It carries out the reaction a sterol + UDP-alpha-D-glucose = a sterol 3-beta-D-glucoside + UDP + H(+). It catalyses the reaction ergosterol + UDP-alpha-D-glucose = ergosteryl 3-beta-D-glucoside + UDP + H(+). In terms of biological role, sterol glycosyltransferase responsible for the glycosylation of ergosterol to form ergosterol-glucoside. In Aspergillus clavatus (strain ATCC 1007 / CBS 513.65 / DSM 816 / NCTC 3887 / NRRL 1 / QM 1276 / 107), this protein is Sterol 3-beta-glucosyltransferase.